A 336-amino-acid chain; its full sequence is Fructose-1,6-bisphosphatase class 1 (336 aa).

Positions 92, 115, 117, and 118 each coordinate Mg(2+). Residues 118 to 121, Asn-211, Tyr-244, 262 to 264, and Lys-274 contribute to the substrate site; these read DGSS and YLY. Mg(2+) is bound at residue Glu-280.

It belongs to the FBPase class 1 family. In terms of assembly, homotetramer. The cofactor is Mg(2+).

Its subcellular location is the cytoplasm. The enzyme catalyses beta-D-fructose 1,6-bisphosphate + H2O = beta-D-fructose 6-phosphate + phosphate. Its pathway is carbohydrate biosynthesis; gluconeogenesis. The chain is Fructose-1,6-bisphosphatase class 1 from Aliivibrio salmonicida (strain LFI1238) (Vibrio salmonicida (strain LFI1238)).